Consider the following 211-residue polypeptide: Transcriptional regulator GfcR (211 aa).

The protein belongs to the purine/pyrimidine phosphoribosyltransferase family. GfcR subfamily.

The protein is Transcriptional regulator GfcR of Methanocaldococcus jannaschii (strain ATCC 43067 / DSM 2661 / JAL-1 / JCM 10045 / NBRC 100440) (Methanococcus jannaschii).